Consider the following 377-residue polypeptide: DNA replication and repair protein RecF (377 aa).

30–37 contacts ATP; that stretch reads GPNGQGKT.

This sequence belongs to the RecF family.

It is found in the cytoplasm. In terms of biological role, the RecF protein is involved in DNA metabolism; it is required for DNA replication and normal SOS inducibility. RecF binds preferentially to single-stranded, linear DNA. It also seems to bind ATP. This is DNA replication and repair protein RecF from Thermobifida fusca (strain YX).